Reading from the N-terminus, the 982-residue chain is Protein phosphatase 1 regulatory subunit 12B (982 aa).

Basic and acidic residues predominate over residues 1–24 (MAELEHLGGKRAESARMRRAEQLR). The disordered stretch occupies residues 1–50 (MAELEHLGGKRAESARMRRAEQLRRWRGSLTEQEPAERRGAGRQPLTRRG). Position 29 is a phosphoserine (S29). ANK repeat units follow at residues 57–86 (EDGA…DINT), 90–119 (DGLT…NVNQ), 123–152 (EGWT…SVGI), 216–245 (SGAT…ELNV), and 249–278 (DGWT…DMDI). 4 disordered regions span residues 342–517 (EETP…RESA), 556–579 (RTPH…SSTP), 606–864 (TDSS…EARE), and 918–948 (AQQK…KMSE). Over residues 362 to 374 (SEEEEGEDEASES) the composition is skewed to acidic residues. Residues 375 to 385 (ETEKEADKKPE) show a composition bias toward basic and acidic residues. Positions 389-401 (NHSNSESKSSITE) are enriched in polar residues. Low complexity predominate over residues 411–421 (FSASSARRFSS). Position 445 is a phosphothreonine (T445). Low complexity predominate over residues 466 to 478 (SSIYRSSSSPRIS). Residues 482–491 (DNKDKERENK) are compositionally biased toward basic and acidic residues. Positions 623 to 632 (VRDEEAESLR) are enriched in basic and acidic residues. Over residues 633-643 (KARSRQARQTR) the composition is skewed to basic residues. T646 carries the post-translational modification Phosphothreonine. A compositionally biased stretch (basic and acidic residues) spans 656–680 (EAERTFSRSRAERQAQEQPREKPTD). The span at 731–742 (TTPASPSTSRPS) shows a compositional bias: low complexity. Residues 743–755 (LYTSSHLLWTNRF) are compositionally biased toward polar residues. Positions 797-807 (ERRRPKERRRG) are enriched in basic residues. T808 carries the post-translational modification Phosphothreonine. Residues 824 to 836 (EEVKETWHERLSR) show a composition bias toward basic and acidic residues. Residue S839 is modified to Phosphoserine. Residues 840–849 (GGSNPTTSDS) show a composition bias toward polar residues. Composition is skewed to basic and acidic residues over residues 850 to 864 (YGDR…EARE), 918 to 927 (AQQKQEKTSD), and 933 to 948 (EMEK…KMSE). Position 947 is a phosphoserine (S947).

PP1 comprises a catalytic subunit, PPP1CA, PPP1CB or PPP1CC, and one or several targeting or regulatory subunits. PPP1R12B mediates binding to myosin. Isoform 3 and isoform 4 bind PPP1R12A, but not isoform 1 of PPP1R12B itself. Binds IL16. In terms of tissue distribution, detected in skeletal muscle, fetal and adult heart, brain, placenta, kidney, spleen, thymus, pancreas and lung. Isoform 3 and isoform 4 are heart specific.

It is found in the cytoplasm. The protein localises to the cytoskeleton. Its subcellular location is the stress fiber. In terms of biological role, regulates myosin phosphatase activity. Augments Ca(2+) sensitivity of the contractile apparatus. The chain is Protein phosphatase 1 regulatory subunit 12B (PPP1R12B) from Homo sapiens (Human).